Reading from the N-terminus, the 397-residue chain is Decapping and exoribonuclease protein (397 aa).

Over residues Met1–Asn20 the composition is skewed to basic and acidic residues. A disordered region spans residues Met1–Ser37. A substrate-binding site is contributed by Arg58. The segment at Leu67–Tyr88 is disordered. Substrate is bound by residues Glu101 and Trp131–Gly133. Residue Glu192 participates in Mg(2+) binding. Cys217 and Glu234 together coordinate substrate. The Mg(2+) site is built by Glu234, Asp236, Glu253, and Leu254. Substrate is bound by residues Lys255 and Gln280. Thr392 is modified (phosphothreonine). Ser394 is modified (phosphoserine).

Belongs to the DXO/Dom3Z family. The cofactor is Mg(2+).

The protein resides in the nucleus. The catalysed reaction is a 5'-end triphospho-ribonucleoside in mRNA + H2O = a 5'-end phospho-ribonucleoside in mRNA + diphosphate + H(+). It catalyses the reaction a 5'-end NAD(+)-phospho-ribonucleoside in mRNA + H2O = a 5'-end phospho-ribonucleoside in mRNA + NAD(+) + H(+). It carries out the reaction a 5'-end NAD(+)-phospho-ribonucleoside in snoRNA + H2O = a 5'-end phospho-ribonucleoside in snoRNA + NAD(+) + H(+). The enzyme catalyses a 5'-end (N(7)-methyl 5'-triphosphoguanosine)-ribonucleoside-ribonucleotide in mRNA + H2O = a (N(7)-methyl 5'-triphosphoguanosine)-nucleoside + a 5'-end phospho-ribonucleoside in mRNA + H(+). The catalysed reaction is a 5'-end FAD-phospho-ribonucleoside in mRNA + H2O = a 5'-end phospho-ribonucleoside in mRNA + FAD + H(+). It catalyses the reaction a 5'-end CoA-ribonucleoside in mRNA + H2O = 3'-dephospho-CoA + a 5'-end phospho-ribonucleoside in mRNA + H(+). Its function is as follows. Decapping enzyme for NAD-capped RNAs: specifically hydrolyzes the nicotinamide adenine dinucleotide (NAD) cap from a subset of RNAs by removing the entire NAD moiety from the 5'-end of an NAD-capped RNA. The NAD-cap is present at the 5'-end of some RNAs and snoRNAs. In contrast to the canonical 5'-end N7 methylguanosine (m7G) cap, the NAD cap promotes mRNA decay. Preferentially acts on NAD-capped transcripts in response to environmental stress. Also acts as a non-canonical decapping enzyme that removes the entire cap structure of m7G capped or incompletely capped RNAs and mediates their subsequent degradation. Specifically degrades pre-mRNAs with a defective 5'-end m7G cap and is part of a pre-mRNA capping quality control. Has decapping activity toward incomplete 5'-end m7G cap mRNAs such as unmethylated 5'-end-capped RNA (cap0), while it has no activity toward 2'-O-ribose methylated m7G cap (cap1). In contrast to canonical decapping enzymes DCP2 and NUDT16, which cleave the cap within the triphosphate linkage, the decapping activity releases the entire cap structure GpppN and a 5'-end monophosphate RNA. Also has 5'-3' exoribonuclease activities: The 5'-end monophosphate RNA is then degraded by the 5'-3' exoribonuclease activity, enabling this enzyme to decap and degrade incompletely capped mRNAs. Also possesses RNA 5'-pyrophosphohydrolase activity by hydrolyzing the 5'-end triphosphate to release pyrophosphates. Exhibits decapping activity towards FAD-capped RNAs. Exhibits decapping activity towards dpCoA-capped RNAs in vitro. This is Decapping and exoribonuclease protein from Bos taurus (Bovine).